Reading from the N-terminus, the 649-residue chain is Putative cystathionine gamma-synthase YML082W (649 aa).

The segment at 242–273 is disordered; that stretch reads NEANHGEDHDGGISGEVDSQEEPHNGLVSTIP. The residue at position 287 (Ser-287) is a Phosphoserine. Lys-451 carries the N6-(pyridoxal phosphate)lysine modification.

The protein belongs to the trans-sulfuration enzymes family. MET7 subfamily. Pyridoxal 5'-phosphate serves as cofactor.

The catalysed reaction is O-succinyl-L-homoserine + L-cysteine = L,L-cystathionine + succinate + H(+). Its pathway is amino-acid biosynthesis; L-methionine biosynthesis via de novo pathway; L-cystathionine from O-succinyl-L-homoserine: step 1/1. Functionally, catalyzes the formation of L-cystathionine from O-succinyl-L-homoserine (OSHS) and L-cysteine, via a gamma-replacement reaction. In the absence of thiol, catalyzes gamma-elimination to form 2-oxobutanoate, succinate and ammonia. This is Putative cystathionine gamma-synthase YML082W from Saccharomyces cerevisiae (strain ATCC 204508 / S288c) (Baker's yeast).